Here is a 238-residue protein sequence, read N- to C-terminus: Zwei Ig domain protein zig-2 (238 aa).

The signal sequence occupies residues 1 to 17; sequence MLKFTAISFVLLNAAES. The 100-residue stretch at 31 to 130 folds into the Ig-like C2-type 1 domain; the sequence is PLLKFTRTPN…NGLTKLEHVA (100 aa). Residues N40 and N43 are each glycosylated (N-linked (GlcNAc...) asparagine). C54 and C117 form a disulfide bridge. 3 N-linked (GlcNAc...) asparagine glycosylation sites follow: N137, N206, and N216. The 82-residue stretch at 149-230 folds into the Ig-like C2-type 2 domain; sequence PFISMTVDFR…NHFGETTAIT (82 aa). An intrachain disulfide couples C170 to C217.

In terms of tissue distribution, expressed in PVT neurons and weakly in some head neurons.

It localises to the secreted. In terms of biological role, probably not involved in maintaining the position of ASI and ASH head neuron cell bodies and ventral nerve cord axons of PVQ, PVP, RMEV, AVK and HSN neurons. The protein is Zwei Ig domain protein zig-2 of Caenorhabditis elegans.